The primary structure comprises 168 residues: Urease accessory protein UreE (168 aa).

Positions 145–168 are disordered; that stretch reads EGGAYAAGQGGGHGPHGQHTHPHH.

The protein belongs to the UreE family.

It localises to the cytoplasm. Functionally, involved in urease metallocenter assembly. Binds nickel. Probably functions as a nickel donor during metallocenter assembly. In Verminephrobacter eiseniae (strain EF01-2), this protein is Urease accessory protein UreE.